A 341-amino-acid polypeptide reads, in one-letter code: Putative UPF0607 protein FLJ37424 (341 aa).

Disordered stretches follow at residues Pro72 to Pro131 and Gly216 to Leu283. Basic and acidic residues predominate over residues Glu79 to Arg101. Residues Glu108–Tyr127 are compositionally biased toward polar residues. Residues Ala243–Leu252 show a composition bias toward basic residues.

It belongs to the UPF0607 family.

The chain is Putative UPF0607 protein FLJ37424 from Homo sapiens (Human).